Here is a 135-residue protein sequence, read N- to C-terminus: Ribosome-binding factor A (135 aa).

It belongs to the RbfA family. As to quaternary structure, monomer. Binds 30S ribosomal subunits, but not 50S ribosomal subunits or 70S ribosomes.

The protein localises to the cytoplasm. Its function is as follows. One of several proteins that assist in the late maturation steps of the functional core of the 30S ribosomal subunit. Associates with free 30S ribosomal subunits (but not with 30S subunits that are part of 70S ribosomes or polysomes). Required for efficient processing of 16S rRNA. May interact with the 5'-terminal helix region of 16S rRNA. The protein is Ribosome-binding factor A of Dinoroseobacter shibae (strain DSM 16493 / NCIMB 14021 / DFL 12).